A 532-amino-acid polypeptide reads, in one-letter code: Phosphoenolpyruvate carboxykinase (ATP) (532 aa).

Positions 60, 194, and 200 each coordinate substrate. ATP is bound by residues Lys200, His219, and 237–245; that span reads GLSGTGKTT. Residues Lys200 and His219 each coordinate Mn(2+). Asp258 serves as a coordination point for Mn(2+). ATP-binding residues include Glu286, Arg324, and Thr449. A substrate-binding site is contributed by Arg324.

Belongs to the phosphoenolpyruvate carboxykinase (ATP) family. Requires Mn(2+) as cofactor.

Its subcellular location is the cytoplasm. It carries out the reaction oxaloacetate + ATP = phosphoenolpyruvate + ADP + CO2. The protein operates within carbohydrate biosynthesis; gluconeogenesis. Its function is as follows. Involved in the gluconeogenesis. Catalyzes the conversion of oxaloacetate (OAA) to phosphoenolpyruvate (PEP) through direct phosphoryl transfer between the nucleoside triphosphate and OAA. This chain is Phosphoenolpyruvate carboxykinase (ATP), found in Cereibacter sphaeroides (strain ATCC 17025 / ATH 2.4.3) (Rhodobacter sphaeroides).